Consider the following 102-residue polypeptide: MNIAEYHQNIEQVWLQIEEQLEEQGCDVDCDTQGSVFTITFADRSQIVVNKQEPLLELWLASKAGGFHFAFKNNQWIAQDGKLFWQCLEQACLAHGEQVNFS.

It belongs to the frataxin family.

In terms of biological role, involved in iron-sulfur (Fe-S) cluster assembly. May act as a regulator of Fe-S biogenesis. The protein is Iron-sulfur cluster assembly protein CyaY of Histophilus somni (strain 2336) (Haemophilus somnus).